A 277-amino-acid polypeptide reads, in one-letter code: Putative phosphoenolpyruvate synthase regulatory protein (277 aa).

152 to 159 (GVSRCGKT) provides a ligand contact to ADP.

This sequence belongs to the pyruvate, phosphate/water dikinase regulatory protein family. PSRP subfamily.

It catalyses the reaction [pyruvate, water dikinase] + ADP = [pyruvate, water dikinase]-phosphate + AMP + H(+). The catalysed reaction is [pyruvate, water dikinase]-phosphate + phosphate + H(+) = [pyruvate, water dikinase] + diphosphate. Functionally, bifunctional serine/threonine kinase and phosphorylase involved in the regulation of the phosphoenolpyruvate synthase (PEPS) by catalyzing its phosphorylation/dephosphorylation. This is Putative phosphoenolpyruvate synthase regulatory protein from Chromohalobacter salexigens (strain ATCC BAA-138 / DSM 3043 / CIP 106854 / NCIMB 13768 / 1H11).